The primary structure comprises 782 residues: MAPHRPAPALLCALSLALCALSLPVRAATASRGASQAGAPQGRVPEARPNSMVVEHPEFLKAGKEPGLQIWRVEKFDLVPVPTNLYGDFFTGDAYVILKTVQLRNGNLQYDLHYWLGNECSQDESGAAAIFTVQLDDYLNGRAVQHREVQGFESATFLGYFKSGLKYKKGGVASGFKHVVPNEVVVQRLFQVKGRRVVRATEVPVSWESFNNGDCFILDLGNNIHQWCGSNSNRYERLKATQVSKGIRDNERSGRARVHVSEEGTEPEAMLQVLGPKPALPAGTEDTAKEDAANRKLAKLYKVSNGAGTMSVSLVADENPFAQGALKSEDCFILDHGKDGKIFVWKGKQANTEERKAALKTASDFITKMDYPKQTQVSVLPEGGETPLFKQFFKNWRDPDQTDGLGLSYLSSHIANVERVPFDAATLHTSTAMAAQHGMDDDGTGQKQIWRIEGSNKVPVDPATYGQFYGGDSYIILYNYRHGGRQGQIIYNWQGAQSTQDEVAASAILTAQLDEELGGTPVQSRVVQGKEPAHLMSLFGGKPMIIYKGGTSREGGQTAPASTRLFQVRANSAGATRAVEVLPKAGALNSNDAFVLKTPSAAYLWVGTGASEAEKTGAQELLRVLRAQPVQVAEGSEPDGFWEALGGKAAYRTSPRLKDKKMDAHPPRLFACSNKIGRFVIEEVPGELMQEDLATDDVMLLDTWDQVFVWVGKDSQEEEKTEALTSAKRYIETDPANRDRRTPITVVKQGFEPPSFVGWFLGWDDDYWSVDPLDRAMAELAA.

The signal sequence occupies residues 1 to 27 (MAPHRPAPALLCALSLALCALSLPVRA). Residues 53–176 (VVEHPEFLKA…YKKGGVASGF (124 aa)) are actin-severing. One copy of the Gelsolin-like 1 repeat lies at 76 to 158 (FDLVPVPTNL…VQGFESATFL (83 aa)). Y86 is subject to Phosphotyrosine; by SRC; in vitro. The Ca(2+) site is built by G92, D93, E124, D136, G141, and A143. The tract at residues 123–126 (DESG) is actin-actin interfilament contact point. 162-169 (KSGLKYKK) contributes to the a 1,2-diacyl-sn-glycero-3-phospho-(1D-myo-inositol-4,5-bisphosphate) binding site. Residue V172 participates in Ca(2+) binding. 188-196 (RLFQVKGRR) contacts a 1,2-diacyl-sn-glycero-3-phospho-(1D-myo-inositol-4,5-bisphosphate). A Gelsolin-like 2 repeat occupies 198–270 (VRATEVPVSW…SEEGTEPEAM (73 aa)). Ca(2+)-binding residues include G213 and D214. C215 and C228 are disulfide-bonded. Residue E236 participates in Ca(2+) binding. Residues 247–262 (IRDNERSGRARVHVSE) show a composition bias toward basic and acidic residues. Residues 247-285 (IRDNERSGRARVHVSEEGTEPEAMLQVLGPKPALPAGTE) form a disordered region. 4 residues coordinate Ca(2+): D286, E329, D330, and E354. The stretch at 317–389 (DENPFAQGAL…LPEGGETPLF (73 aa)) is one Gelsolin-like 3 repeat. Y409 is subject to Phosphotyrosine; by SRC; in vitro. Residues 434–782 (AAQHGMDDDG…LDRAMAELAA (349 aa)) form an actin-binding, Ca-sensitive region. Residues 455 to 536 (SNKVPVDPAT…VQGKEPAHLM (82 aa)) form a Gelsolin-like 4 repeat. The residue at position 465 (Y465) is a Phosphotyrosine; by SRC. Positions 471, 472, 502, 514, 519, 521, and 551 each coordinate Ca(2+). Residues 576–642 (TRAVEVLPKA…AEGSEPDGFW (67 aa)) form a Gelsolin-like 5 repeat. Residue K584 is modified to N6-acetyllysine. Positions 591 and 592 each coordinate Ca(2+). Residue Y603 is modified to Phosphotyrosine; by SRC; in vitro. Position 614 (E614) interacts with Ca(2+). Phosphotyrosine; by SRC; in vitro is present on Y651. The stretch at 681–756 (IEEVPGELMQ…VKQGFEPPSF (76 aa)) is one Gelsolin-like 6 repeat. Residues D696, D697, and E719 each coordinate Ca(2+). T742 is modified (phosphothreonine).

The protein belongs to the villin/gelsolin family. As to quaternary structure, binds to actin and to fibronectin. Identified in a complex composed of ACTA1, COBL, GSN and TMSB4X. Interacts with the inactive form of EIF2AK2/PKR. Interacts with FLII. Phosphorylation on Tyr-86, Tyr-409, Tyr-465, Tyr-603 and Tyr-651 in vitro is induced in presence of phospholipids. As to expression, phagocytic cells, platelets, fibroblasts, nonmuscle cells, smooth and skeletal muscle cells.

The protein resides in the cytoplasm. The protein localises to the cytoskeleton. It is found in the secreted. In terms of biological role, calcium-regulated, actin-modulating protein that binds to the plus (or barbed) ends of actin monomers or filaments, preventing monomer exchange (end-blocking or capping). It can promote the assembly of monomers into filaments (nucleation) as well as sever filaments already formed. Plays a role in ciliogenesis. In Homo sapiens (Human), this protein is Gelsolin (GSN).